The sequence spans 368 residues: Ribosomal RNA large subunit methyltransferase M (368 aa).

Residues serine 199, 232 to 235 (APGG), aspartate 251, aspartate 271, and aspartate 287 contribute to the S-adenosyl-L-methionine site. Lysine 316 acts as the Proton acceptor in catalysis.

The protein belongs to the class I-like SAM-binding methyltransferase superfamily. RNA methyltransferase RlmE family. RlmM subfamily. In terms of assembly, monomer.

The protein localises to the cytoplasm. It catalyses the reaction cytidine(2498) in 23S rRNA + S-adenosyl-L-methionine = 2'-O-methylcytidine(2498) in 23S rRNA + S-adenosyl-L-homocysteine + H(+). Catalyzes the 2'-O-methylation at nucleotide C2498 in 23S rRNA. The sequence is that of Ribosomal RNA large subunit methyltransferase M from Aromatoleum aromaticum (strain DSM 19018 / LMG 30748 / EbN1) (Azoarcus sp. (strain EbN1)).